The primary structure comprises 264 residues: Carbonic anhydrase 7 (264 aa).

Residues 5–262 (HGWGYGQDDG…LKGRVVKASF (258 aa)) enclose the Alpha-carbonic anhydrase domain. His66 (proton donor/acceptor) is an active-site residue. Zn(2+) contacts are provided by His96, His98, and His121. 201-202 (TT) is a binding site for substrate.

It belongs to the alpha-carbonic anhydrase family. It depends on Zn(2+) as a cofactor.

It is found in the cytoplasm. It carries out the reaction hydrogencarbonate + H(+) = CO2 + H2O. Its activity is regulated as follows. Activated by histamine, L-adrenaline, L- and D-histidine, and L- and D-phenylalanine. Inhibited by coumarins, sulfonamide derivatives such as acetazolamide (AZA), by saccharin and Foscarnet (phosphonoformate trisodium salt). Functionally, reversible hydration of carbon dioxide. The protein is Carbonic anhydrase 7 (CA7) of Homo sapiens (Human).